The chain runs to 356 residues: MKNILLAGAVSMIGTLVGTRWFIHWLAAKGYGQFIRDDGPTTHKTKKGTPTMGGAVIIVSVLLAYLVAHLVTWTHPSISALLVLWLFSGLGFIGFLDDWTKISKQRSLGLKPKGKLLGQAFVAITFAIGVMYFPDVHGVTPGSPAISFLRDISWLYLPVWLGIVWVILLIAGSSNAVNLTDGLDGLATGASTMVFGAYTVLSIWQFNQWCSRPTTAGNHCYAVRDPHDIAVVAIAIAGACFGFLWWNAKPAQIFLGDTGSLALGGAVAGMAVVSRTELLLVIIGALFVIETVSVMLQVSVFKITGGKRVFKMAPLHHHFELKGWAEVTVVIRFWIICGLAVSAGLGIFYAEWVAGQ.

10 consecutive transmembrane segments (helical) span residues 4–24 (ILLA…WFIH), 53–73 (GGAV…LVTW), 76–96 (PSIS…IGFL), 116–136 (LLGQ…FPDV), 152–172 (ISWL…LIAG), 186–206 (LATG…IWQF), 228–248 (DIAV…WWNA), 253–273 (IFLG…MAVV), 278–298 (LLLV…MLQV), and 333–353 (FWII…AEWV).

It belongs to the glycosyltransferase 4 family. MraY subfamily. Mg(2+) is required as a cofactor.

The protein localises to the cell membrane. It catalyses the reaction UDP-N-acetyl-alpha-D-muramoyl-L-alanyl-gamma-D-glutamyl-meso-2,6-diaminopimeloyl-D-alanyl-D-alanine + di-trans,octa-cis-undecaprenyl phosphate = di-trans,octa-cis-undecaprenyl diphospho-N-acetyl-alpha-D-muramoyl-L-alanyl-D-glutamyl-meso-2,6-diaminopimeloyl-D-alanyl-D-alanine + UMP. The protein operates within cell wall biogenesis; peptidoglycan biosynthesis. Catalyzes the initial step of the lipid cycle reactions in the biosynthesis of the cell wall peptidoglycan: transfers peptidoglycan precursor phospho-MurNAc-pentapeptide from UDP-MurNAc-pentapeptide onto the lipid carrier undecaprenyl phosphate, yielding undecaprenyl-pyrophosphoryl-MurNAc-pentapeptide, known as lipid I. The protein is Phospho-N-acetylmuramoyl-pentapeptide-transferase of Cutibacterium acnes (strain DSM 16379 / KPA171202) (Propionibacterium acnes).